Consider the following 434-residue polypeptide: ATP-dependent protease ATPase subunit HslU (434 aa).

Residues Ile18, 60 to 65 (GVGKTE), Asp247, Glu312, and Arg384 contribute to the ATP site.

This sequence belongs to the ClpX chaperone family. HslU subfamily. A double ring-shaped homohexamer of HslV is capped on each side by a ring-shaped HslU homohexamer. The assembly of the HslU/HslV complex is dependent on binding of ATP.

It is found in the cytoplasm. Its function is as follows. ATPase subunit of a proteasome-like degradation complex; this subunit has chaperone activity. The binding of ATP and its subsequent hydrolysis by HslU are essential for unfolding of protein substrates subsequently hydrolyzed by HslV. HslU recognizes the N-terminal part of its protein substrates and unfolds these before they are guided to HslV for hydrolysis. This is ATP-dependent protease ATPase subunit HslU from Brucella suis (strain ATCC 23445 / NCTC 10510).